We begin with the raw amino-acid sequence, 306 residues long: Homoserine kinase (306 aa).

91-101 (PLARGLGSSAT) contributes to the ATP binding site.

This sequence belongs to the GHMP kinase family. Homoserine kinase subfamily.

Its subcellular location is the cytoplasm. The enzyme catalyses L-homoserine + ATP = O-phospho-L-homoserine + ADP + H(+). It participates in amino-acid biosynthesis; L-threonine biosynthesis; L-threonine from L-aspartate: step 4/5. Functionally, catalyzes the ATP-dependent phosphorylation of L-homoserine to L-homoserine phosphate. The chain is Homoserine kinase from Synechocystis sp. (strain ATCC 27184 / PCC 6803 / Kazusa).